A 329-amino-acid chain; its full sequence is ADP-L-glycero-D-manno-heptose-6-epimerase (329 aa).

NADP(+) is bound by residues 10-11 (FI), 31-32 (DD), Lys38, Lys53, 74-78 (QGACS), and Asn91. Tyr138 functions as the Proton acceptor in the catalytic mechanism. Residue Lys142 coordinates NADP(+). Asn167 lines the substrate pocket. The NADP(+) site is built by Val168 and Lys176. Catalysis depends on Lys176, which acts as the Proton acceptor. Substrate contacts are provided by residues Arg178, His185, 199 to 202 (FAGW), Arg212, and Tyr291.

It belongs to the NAD(P)-dependent epimerase/dehydratase family. HldD subfamily. As to quaternary structure, homopentamer. NADP(+) is required as a cofactor.

It carries out the reaction ADP-D-glycero-beta-D-manno-heptose = ADP-L-glycero-beta-D-manno-heptose. It participates in nucleotide-sugar biosynthesis; ADP-L-glycero-beta-D-manno-heptose biosynthesis; ADP-L-glycero-beta-D-manno-heptose from D-glycero-beta-D-manno-heptose 7-phosphate: step 4/4. The protein operates within bacterial outer membrane biogenesis; LPS core biosynthesis. Functionally, catalyzes the interconversion between ADP-D-glycero-beta-D-manno-heptose and ADP-L-glycero-beta-D-manno-heptose via an epimerization at carbon 6 of the heptose. The sequence is that of ADP-L-glycero-D-manno-heptose-6-epimerase from Bordetella parapertussis (strain 12822 / ATCC BAA-587 / NCTC 13253).